The following is a 790-amino-acid chain: LPS-assembly protein LptD (790 aa).

The N-terminal stretch at 1 to 20 (MRMLRWLILSAFSVAGAVQA) is a signal peptide.

The protein belongs to the LptD family. In terms of assembly, component of the lipopolysaccharide transport and assembly complex. Interacts with LptE and LptA.

It localises to the cell outer membrane. In terms of biological role, together with LptE, is involved in the assembly of lipopolysaccharide (LPS) at the surface of the outer membrane. In Bordetella bronchiseptica (strain ATCC BAA-588 / NCTC 13252 / RB50) (Alcaligenes bronchisepticus), this protein is LPS-assembly protein LptD.